Reading from the N-terminus, the 276-residue chain is Probable endonuclease LCL3 (276 aa).

Residues 17–37 (FNVVILSIFFSGSFIGAWAFF) form a helical membrane-spanning segment. In terms of domain architecture, TNase-like spans 58–263 (RWLFGKVTAV…KARRRGIWSQ (206 aa)). Arginine 154 is a catalytic residue. Position 159 (aspartate 159) interacts with Ca(2+). Active-site residues include glutamate 162 and arginine 202.

This sequence belongs to the LCL3 family.

It is found in the mitochondrion. It localises to the membrane. The sequence is that of Probable endonuclease LCL3 (LCL3) from Zygosaccharomyces rouxii (strain ATCC 2623 / CBS 732 / NBRC 1130 / NCYC 568 / NRRL Y-229).